The chain runs to 342 residues: Putative aryl-alcohol dehydrogenase AAD16 (342 aa).

The protein belongs to the aldo/keto reductase family. Aldo/keto reductase 2 subfamily.

Its function is as follows. Putative aryl-alcohol dehydrogenase. In Saccharomyces cerevisiae (strain ATCC 204508 / S288c) (Baker's yeast), this protein is Putative aryl-alcohol dehydrogenase AAD16.